A 1413-amino-acid chain; its full sequence is Zinc finger SWIM domain-containing protein 8 (1413 aa).

Phosphoserine occurs at positions 36, 48, and 53. Residues arginine 45–glycine 65 are disordered. The span at threonine 55 to glycine 65 shows a compositional bias: gly residues. The SWIM-type zinc finger occupies tyrosine 172–isoleucine 208. Positions glutamate 600–glutamine 817 are disordered. Residues histidine 604–serine 625 are compositionally biased toward polar residues. Residues serine 704–serine 715 are compositionally biased toward gly residues. A Phosphothreonine modification is found at threonine 724. The span at isoleucine 729–leucine 744 shows a compositional bias: polar residues. Phosphoserine is present on residues serine 738, serine 741, and serine 745. Residues glycine 759–alanine 794 show a composition bias toward low complexity. A compositionally biased stretch (basic and acidic residues) spans lysine 795–alanine 811. A phosphoserine mark is found at serine 852 and serine 1412.

This sequence belongs to the ZSWIM8 family. As to quaternary structure, component of the SCF-like E3 ubiquitin-protein ligase complex which contains CUL3, RBX1, ELOB, ELOC and ZSWIM8. Interacts with DAB1.

The protein localises to the cytoplasm. The protein resides in the cytosol. It functions in the pathway protein modification; protein ubiquitination. Functionally, substrate recognition component of a SCF-like E3 ubiquitin-protein ligase complex that promotes target-directed microRNA degradation (TDMD), a process that mediates degradation of microRNAs (miRNAs). The SCF-like E3 ubiquitin-protein ligase complex acts by catalyzing ubiquitination and subsequent degradation of AGO proteins (AGO1, AGO2, AGO3 and/or AGO4), thereby exposing miRNAs for degradation. Specifically recognizes and binds AGO proteins when they are engaged with a TDMD target. May also acts as a regulator of axon guidance: specifically recognizes misfolded ROBO3 and promotes its ubiquitination and subsequent degradation. Plays an essential role for proper embryonic development of heart and lung. Controls protein quality of DAB1, a key signal molecule for brain development, thus protecting its signaling strength. Mechanistically, recognizes intrinsically disordered regions of DAB1 and eliminates misfolded DAB1 that cannot be properly phosphorylated. This chain is Zinc finger SWIM domain-containing protein 8, found in Bos taurus (Bovine).